The following is a 2493-amino-acid chain: MAKQRQTTKSSKRYRYSSFKARIDDLKIEPARNLEKRVHDYVESSHFLASFDQWKEINLSAKFTEFAAEIEHDVQTLPQILYHDKKIFNSLVSFINFHDEFSLQPLLDLLAQFCHDLGPDFLKFYEEAIKTLINLLDAAIEFESSNVFEWGFNCLAYIFKYLSKFLVKKLVLTCDLLIPLLSHSKEYLSRFSAEALSFLVRKCPVSNLREFVRSVFEKLEGDDEQTNLYEGLLILFTESMTSTQETLHSKAKAIMSVLLHEALTKSSPERSVSLLSDIWMNISKYASIESLLPVYEVMYQDFNDSLDATNIDRILKVLTTIVFSESGRKIPDWNKITILIERIMSQSENCASLSQDKVAFLFALFIRNSDVKTLTLFHQKLFNYALTNISDCFLEFFQFALRLSYERVFSFNGLKFLQLFLKKNWQSQGKKIALFFLEVDDKPELQKVREVNFPEEFILSIRDFFVTAEINDSNDLFEIYWRAIIFKYSKLQNTEIIIPLLERIFSTFASPDNFTKDMVGTLLKIYRKEDDASGNNLLKTILDNYENYKESLNFLRGWNKLVSNLHPSESLKGLMSHYPSLLLSLTDNFMLPDGKIRYETLELMKTLMILQGMQVPDLLSSCMVIEEIPLTLQNARDLTIRIKNVGAEFGKTKTDKLVSSFFLKYLFGLLTVRFSPVWTGVFDTLPNVYTKDEALVWKLVLSFIKLPDENQNLDYYQPLLEDGANKVLWDSSVVRLRDTIDTFSHIWSKYSTQNTSIISTTIERRGNTTYPILIRNQALKVMLSIPQVAENHFVDIAPFVYNDFKTYKDEEDMENERVITGSWTEVDRNVFLKTLSKFKNIKNVYSATELHDHLMVLLGSRNTDVQKLALDALLAYKNPTLNKYRDNLKNLLDDTLFKDEITTFLTENGSQSIKAEDEKVVMPYVLRIFFGRAQVPPTSGQKRSRKIAVISVLPNFKKPYINDFLSLASERLDYNYFFGNSHQINSSKATLKTIRRMTGFVNIVNSTLSVLRTNFPLHTNSVLQPLIYSIAMAYYVLDTESTEEVHLRKMASNLRQQGLKCLSSVFEFVGNTFDWSTSMEDIYAVVVKPRISHFSDENLQQPSSLLRLFLYWAHNPSLYQFLYYDEFATATALMDTISNQHVKEAVIGPIIEAADSIIRNPVNDDHYVDLVTLICTSCLKILPSLYVKLSDSNSISTFLNLLVSITEMGFIQDDHVRSRLISSLISILKGKLKKLQENDTQKILKILKLIVFNYNCSWSDIEELYTTISSLFKTFDERNLRVSLTELFIELGRKVPELESISKLVADLNSYSSSRMHEYDFPRILSTFKGLIEDGYKSYSELEWLPLLFTFLHFINNKEELALRTNASHAIMKFIDFINEKPNLNEASKSISMLKDILLPNIRIGLRDSLEEVQSEYVSVLSYMVKNTKYFTDFEDMAILLYNGDEEADFFTNVNHIQLHRRQRAIKRLGEHAHQLKDNSISHYLIPMIEHYVFSDDERYRNIGNETQIAIGGLAQHMSWNQYKALLRRYISMLKTKPNQMKQAVQLIVQLSVPLRETLRIVRDGAESKLTLSKFPSNLDEPSNFIKQELYPTLSKILGTRDDETIIERMPIAEALVNIVLGLTNDDITNFLPSILTNICQVLRSKSEELRDAVRVTLGKISIILGAEYLVFVIKELMATLKRGSQIHVLSYTVHYILKSMHGVLKHSDLDTSSSMIVKIIMENIFGFAGEEKDSENYHTKVKEIKSNKSYDAGEILASNISLTEFGTLLSPVKALLMVRINLRNQNKLSELLRRYLLGLNHNSDSESESILKFCHQLFQESEMSNSPQIPKKKVKDQVDEKEDFFLVNLESKSYTINSNSLLLNSTLQKFALDLLRNVITRHRSFLTVSHLEGFIPFLRDSLLSENEGVVISTLRILITLIRLDFSDESSEIFKNCARKVLNIIKVSPSTSSELCQMGLKFLSAFIRHTDSTLKDTALSYVLGRVLPDLNEPSRQGLAFNFLKALVSKHIMLPELYDIADTTREIMVTNHSKEIRDVSRSVYYQFLMEYDQSKGRLEKQFKFMVDNLQYPTESGRQSVMELINLIITKANPALLSKLSSSFFLALVNVSFNDDAPRCREMASVLISTMLPKLENKDLEIVEKYIAAWLKQVDNASFLNLGLRTYKVYLKSIGFEHTIELDELAIKRIRYILSDTSVGSEHQWDLVYSALNTFSSYMEATESVYKHGFKDIWDGIITCLLYPHSWVRQSAANLVHQLIANKDKLEISLTNLEIQTIATRILHQLGAPSIPENLANVSIKTLVNISILWKEQRTPFIMDVSKQTGEDLKYTTAIDYMVTRIGGIIRSDEHRMDSFMSKKACIQLLALLVQVLDEDEVIAEGEKILLPLYGYLETYYSRAVDEEQEELRTLSNECLKILEDKLQVSDFTKIYTAVKQTVLERRKERRSKRAILAVNAPQISADKKLRKHARSREKRKHEKDENGYYQRRNKRKRA.

HEAT repeat units follow at residues 227 to 264 (NLYE…EALT), 495 to 532 (EIII…EDDA), 576 to 613 (SHYP…LQGM), 845 to 882 (YSAT…PTLN), 1176 to 1214 (TSCL…IQDD), 1216 to 1252 (VRSR…LIVF), 1342 to 1380 (LEWL…FINE), 1393 to 1430 (MLKD…NTKY), 1480 to 1520 (SISH…HMSW), 1522 to 1558 (QYKA…LRET), 1588 to 1625 (QELY…GLTN), 1630 to 1667 (NFLP…ILGA), 1890 to 1927 (SHLE…LDFS), 1953 to 1992 (SELC…DLNE), 2120 to 2157 (EMAS…NASF), and 2358 to 2397 (KACI…YYSR). The disordered stretch occupies residues 2457–2493 (QISADKKLRKHARSREKRKHEKDENGYYQRRNKRKRA). Residues 2463 to 2476 (KLRKHARSREKRKH) show a composition bias toward basic residues.

It belongs to the UTP20 family. In terms of assembly, interacts with snoRNA U3. Interacts with MPP10. Component of the ribosomal small subunit (SSU) processome composed of at least 40 protein subunits and snoRNA U3.

The protein localises to the cytoplasm. Its subcellular location is the nucleus. The protein resides in the nucleolus. Involved in nucleolar processing of pre-18S ribosomal RNA and ribosome assembly. The sequence is that of U3 small nucleolar RNA-associated protein 20 (UTP20) from Saccharomyces cerevisiae (strain ATCC 204508 / S288c) (Baker's yeast).